The primary structure comprises 217 residues: Pyridoxine/pyridoxamine 5'-phosphate oxidase (217 aa).

Substrate is bound by residues arginine 13–tyrosine 16 and lysine 71. Residues arginine 66–lysine 71, tyrosine 81–threonine 82, arginine 87, lysine 88, and glutamine 110 each bind FMN. The substrate site is built by tyrosine 128, arginine 132, and serine 136. Residues glutamine 145 to serine 146 and tryptophan 190 each bind FMN. Arginine 196–histidine 198 is a substrate binding site. Arginine 200 serves as a coordination point for FMN.

It belongs to the pyridoxamine 5'-phosphate oxidase family. Homodimer. It depends on FMN as a cofactor.

The enzyme catalyses pyridoxamine 5'-phosphate + O2 + H2O = pyridoxal 5'-phosphate + H2O2 + NH4(+). It carries out the reaction pyridoxine 5'-phosphate + O2 = pyridoxal 5'-phosphate + H2O2. It participates in cofactor metabolism; pyridoxal 5'-phosphate salvage; pyridoxal 5'-phosphate from pyridoxamine 5'-phosphate: step 1/1. Its pathway is cofactor metabolism; pyridoxal 5'-phosphate salvage; pyridoxal 5'-phosphate from pyridoxine 5'-phosphate: step 1/1. Functionally, catalyzes the oxidation of either pyridoxine 5'-phosphate (PNP) or pyridoxamine 5'-phosphate (PMP) into pyridoxal 5'-phosphate (PLP). The polypeptide is Pyridoxine/pyridoxamine 5'-phosphate oxidase (Yersinia enterocolitica serotype O:8 / biotype 1B (strain NCTC 13174 / 8081)).